Reading from the N-terminus, the 240-residue chain is Ubiquinone biosynthesis O-methyltransferase (240 aa).

The S-adenosyl-L-methionine site is built by R44, G64, D85, and M129.

The protein belongs to the methyltransferase superfamily. UbiG/COQ3 family.

The enzyme catalyses a 3-demethylubiquinol + S-adenosyl-L-methionine = a ubiquinol + S-adenosyl-L-homocysteine + H(+). It catalyses the reaction a 3-(all-trans-polyprenyl)benzene-1,2-diol + S-adenosyl-L-methionine = a 2-methoxy-6-(all-trans-polyprenyl)phenol + S-adenosyl-L-homocysteine + H(+). Its pathway is cofactor biosynthesis; ubiquinone biosynthesis. O-methyltransferase that catalyzes the 2 O-methylation steps in the ubiquinone biosynthetic pathway. The polypeptide is Ubiquinone biosynthesis O-methyltransferase (Escherichia coli O127:H6 (strain E2348/69 / EPEC)).